A 239-amino-acid polypeptide reads, in one-letter code: Fatty acid metabolism regulator protein (239 aa).

In terms of domain architecture, HTH gntR-type spans 6–74 (KGPASFAEKY…HGKPTQVNNF (69 aa)). Residues 34 to 53 (ERELSELIGVTRTTLREVLQ) constitute a DNA-binding region (H-T-H motif).

In terms of assembly, homodimer.

It localises to the cytoplasm. Functionally, multifunctional regulator of fatty acid metabolism. The protein is Fatty acid metabolism regulator protein of Shewanella denitrificans (strain OS217 / ATCC BAA-1090 / DSM 15013).